Reading from the N-terminus, the 389-residue chain is Aspartate aminotransferase (389 aa).

2 residues coordinate L-aspartate: glycine 34 and asparagine 171. The residue at position 233 (lysine 233) is an N6-(pyridoxal phosphate)lysine. Arginine 362 is an L-aspartate binding site.

This sequence belongs to the class-I pyridoxal-phosphate-dependent aminotransferase family. In terms of assembly, homodimer. The cofactor is pyridoxal 5'-phosphate.

It localises to the cytoplasm. The catalysed reaction is L-aspartate + 2-oxoglutarate = oxaloacetate + L-glutamate. The sequence is that of Aspartate aminotransferase (aspC) from Pyrococcus abyssi (strain GE5 / Orsay).